The chain runs to 361 residues: MIIEEAQAINSFFRSESSKEVYGLIWLLVPILTLVLGITIGVLVIVWLERKISAGIQRRIGPEYAGPLGILQALADGVKLLFKEDLLPSRGDIRLFSVGPSVAVVSILLSYSVIPFGYHLVLTDLSIGVFLWIAISSIAPIGLLMSGYGSNNKYSFSGGLRAAAQSISYEIPLTPCVLSISLLSNSSSTVDIVEAQSKYGFWGWNLWRQPIGFLVFIISSLAECERLPFDLPEAEEELVAGYQTEYSGIKFGLFYVASYLNLLVSSLFVTVLYLGGWNLPIPYIPITELFEINKTSEVFGTTISLLITLAKAYLFLFIPISTRWTLPRLRMDQLLNLGWKSLLPIALGNLLLTTSSQLVSL.

6 consecutive transmembrane segments (helical) span residues 25-45, 102-122, 125-145, 246-266, 298-318, and 334-354; these read IWLL…VLVI, VAVV…HLVL, LSIG…GLLM, YSGI…LVSS, VFGT…FLFI, and LLNL…LLTT.

This sequence belongs to the complex I subunit 1 family. NDH is composed of at least 16 different subunits, 5 of which are encoded in the nucleus.

It is found in the plastid. It localises to the chloroplast thylakoid membrane. It catalyses the reaction a plastoquinone + NADH + (n+1) H(+)(in) = a plastoquinol + NAD(+) + n H(+)(out). The catalysed reaction is a plastoquinone + NADPH + (n+1) H(+)(in) = a plastoquinol + NADP(+) + n H(+)(out). Functionally, NDH shuttles electrons from NAD(P)H:plastoquinone, via FMN and iron-sulfur (Fe-S) centers, to quinones in the photosynthetic chain and possibly in a chloroplast respiratory chain. The immediate electron acceptor for the enzyme in this species is believed to be plastoquinone. Couples the redox reaction to proton translocation, and thus conserves the redox energy in a proton gradient. The protein is NAD(P)H-quinone oxidoreductase subunit 1, chloroplastic of Nymphaea alba (White water-lily).